Consider the following 66-residue polypeptide: Large ribosomal subunit protein bL35 (66 aa).

Belongs to the bacterial ribosomal protein bL35 family.

This chain is Large ribosomal subunit protein bL35, found in Thermodesulfovibrio yellowstonii (strain ATCC 51303 / DSM 11347 / YP87).